A 128-amino-acid polypeptide reads, in one-letter code: UPF0102 protein RPB_0420 (128 aa).

It belongs to the UPF0102 family.

The protein is UPF0102 protein RPB_0420 of Rhodopseudomonas palustris (strain HaA2).